The chain runs to 523 residues: NAD(P)H-quinone oxidoreductase subunit 2 (523 aa).

14 consecutive transmembrane segments (helical) span residues 29–49 (AIAPEGAVLVAMLATLLVDLA), 57–77 (WVPPICYAGLGTALVLLAQQW), 94–114 (LAIAFRAVVALSTLLSLLISW), 123–143 (PIGEYAAILLAATLGAMLLCG), 147–167 (LVSVFVSLETLSVASYLLAGY), 182–202 (LLVGSAAAAVFLYGASLLYGL), 221–243 (PLAALSLVFVLATVAFKIAAVPF), 255–275 (PTPVVAFLSVGSKAAGFALAL), 291–311 (LLFTVLAVLSMTLGNVVALAQ), 317–337 (MLAYSSIGQAGFVMIGLVCGT), 345–365 (VLYMAAYLFMNLGAFACIILF), 389–409 (LGLSLCLLSLGGIPPMLGFFG), 424–444 (LLVVVGLVTSVVSIYYYISVI), and 477–497 (IALVGCVVVTAVGGILSNPLF).

It belongs to the complex I subunit 2 family. As to quaternary structure, NDH-1 can be composed of about 15 different subunits; different subcomplexes with different compositions have been identified which probably have different functions.

Its subcellular location is the cellular thylakoid membrane. The enzyme catalyses a plastoquinone + NADH + (n+1) H(+)(in) = a plastoquinol + NAD(+) + n H(+)(out). It catalyses the reaction a plastoquinone + NADPH + (n+1) H(+)(in) = a plastoquinol + NADP(+) + n H(+)(out). NDH-1 shuttles electrons from an unknown electron donor, via FMN and iron-sulfur (Fe-S) centers, to quinones in the respiratory and/or the photosynthetic chain. The immediate electron acceptor for the enzyme in this species is believed to be plastoquinone. Couples the redox reaction to proton translocation, and thus conserves the redox energy in a proton gradient. Cyanobacterial NDH-1 also plays a role in inorganic carbon-concentration. In Prochlorococcus marinus (strain MIT 9303), this protein is NAD(P)H-quinone oxidoreductase subunit 2.